The following is a 446-amino-acid chain: UDP-N-acetylmuramoylalanine--D-glutamate ligase (446 aa).

115–121 (GTNGKTT) lines the ATP pocket.

This sequence belongs to the MurCDEF family.

It is found in the cytoplasm. The catalysed reaction is UDP-N-acetyl-alpha-D-muramoyl-L-alanine + D-glutamate + ATP = UDP-N-acetyl-alpha-D-muramoyl-L-alanyl-D-glutamate + ADP + phosphate + H(+). It participates in cell wall biogenesis; peptidoglycan biosynthesis. Cell wall formation. Catalyzes the addition of glutamate to the nucleotide precursor UDP-N-acetylmuramoyl-L-alanine (UMA). This Trichlorobacter lovleyi (strain ATCC BAA-1151 / DSM 17278 / SZ) (Geobacter lovleyi) protein is UDP-N-acetylmuramoylalanine--D-glutamate ligase.